The primary structure comprises 86 residues: Immunity protein CdiI-1 (86 aa).

Interacts with the C-terminal fragment (CT) of cognate toxin protein CdiA-EC869.

Immunity protein component of a toxin-immunity protein module, which functions as a cellular contact-dependent growth inhibition (CDI) system. CDI modules allow bacteria to communicate with and inhibit the growth of closely related neighboring bacteria in a contact-dependent fashion. Neutralizes the toxic activity of cognate toxin CdiA-EC869 (the C-terminal 289 residue CT fragment). Does not inhibit toxic activity of CdiA from other toxin-immunity modules or strains of E.coli. This Escherichia coli O157:H7 (strain EC869) protein is Immunity protein CdiI-1.